We begin with the raw amino-acid sequence, 333 residues long: 4-hydroxy-3-methylbut-2-enyl diphosphate reductase (333 aa).

[4Fe-4S] cluster is bound at residue Cys-34. (2E)-4-hydroxy-3-methylbut-2-enyl diphosphate-binding residues include His-63 and His-96. His-63 and His-96 together coordinate dimethylallyl diphosphate. Isopentenyl diphosphate-binding residues include His-63 and His-96. Cys-118 is a binding site for [4Fe-4S] cluster. His-146 is a (2E)-4-hydroxy-3-methylbut-2-enyl diphosphate binding site. Residue His-146 participates in dimethylallyl diphosphate binding. His-146 is an isopentenyl diphosphate binding site. Glu-148 serves as the catalytic Proton donor. Thr-186 is a binding site for (2E)-4-hydroxy-3-methylbut-2-enyl diphosphate. Cys-216 is a binding site for [4Fe-4S] cluster. Residues Ser-244, Ser-245, Asn-246, and Ser-289 each contribute to the (2E)-4-hydroxy-3-methylbut-2-enyl diphosphate site. 4 residues coordinate dimethylallyl diphosphate: Ser-244, Ser-245, Asn-246, and Ser-289. The isopentenyl diphosphate site is built by Ser-244, Ser-245, Asn-246, and Ser-289.

The protein belongs to the IspH family. The cofactor is [4Fe-4S] cluster.

It catalyses the reaction isopentenyl diphosphate + 2 oxidized [2Fe-2S]-[ferredoxin] + H2O = (2E)-4-hydroxy-3-methylbut-2-enyl diphosphate + 2 reduced [2Fe-2S]-[ferredoxin] + 2 H(+). It carries out the reaction dimethylallyl diphosphate + 2 oxidized [2Fe-2S]-[ferredoxin] + H2O = (2E)-4-hydroxy-3-methylbut-2-enyl diphosphate + 2 reduced [2Fe-2S]-[ferredoxin] + 2 H(+). The protein operates within isoprenoid biosynthesis; dimethylallyl diphosphate biosynthesis; dimethylallyl diphosphate from (2E)-4-hydroxy-3-methylbutenyl diphosphate: step 1/1. It participates in isoprenoid biosynthesis; isopentenyl diphosphate biosynthesis via DXP pathway; isopentenyl diphosphate from 1-deoxy-D-xylulose 5-phosphate: step 6/6. Catalyzes the conversion of 1-hydroxy-2-methyl-2-(E)-butenyl 4-diphosphate (HMBPP) into a mixture of isopentenyl diphosphate (IPP) and dimethylallyl diphosphate (DMAPP). Acts in the terminal step of the DOXP/MEP pathway for isoprenoid precursor biosynthesis. The polypeptide is 4-hydroxy-3-methylbut-2-enyl diphosphate reductase (Mycobacterium sp. (strain JLS)).